Consider the following 158-residue polypeptide: Eukaryotic translation initiation factor 5A-3 (158 aa).

Over residues 1–10 (MSDDEHHFES) the composition is skewed to basic and acidic residues. Residues 1–23 (MSDDEHHFESSDAGASKTYPQQA) form a disordered region. Position 2 is a phosphoserine (S2). K51 is subject to Hypusine.

This sequence belongs to the eIF-5A family. In terms of processing, lys-52 undergoes hypusination, a unique post-translational modification that consists in the addition of a butylamino group from spermidine to lysine side chain, leading to the formation of the unusual amino acid hypusine. eIF-5As are the only known proteins to undergo this modification, which is essential for their function. In terms of tissue distribution, expressed in the vascular tissues of roots, stems and leaves. Localized in phloem companion cells rather than sieve-tube members. Not expressed in xylem or procambium. Detected in root tips and in the chalazal tissue of fertilized ovules.

In terms of biological role, translation factor that promotes translation elongation and termination, particularly upon ribosome stalling at specific amino acid sequence contexts. Binds between the exit (E) and peptidyl (P) site of the ribosome and promotes rescue of stalled ribosome: specifically required for efficient translation of polyproline-containing peptides as well as other motifs that stall the ribosome. Acts as a ribosome quality control (RQC) cofactor by joining the RQC complex to facilitate peptidyl transfer during CAT tailing step. Involved in supporting growth and plays a regulatory role in the response to sub-lethal osmotic and nutrient stress. The chain is Eukaryotic translation initiation factor 5A-3 (ELF5A-3) from Arabidopsis thaliana (Mouse-ear cress).